The primary structure comprises 385 residues: Methionine aminopeptidase 1 (385 aa).

The C6H2-type zinc finger occupies 6-59 (SRVCETEGCSSEAKLQCPTCIKLGIQGSYFCSQECFKGSWASHKLLHKKAKDDK). Positions 9, 14, 22, 25, 36, 40, 48, and 52 each coordinate Zn(2+). His-203 contacts a protein. Zn(2+) is bound by residues Asp-220, Asp-231, and His-294. An a protein-binding site is contributed by His-301. Zn(2+)-binding residues include Glu-327 and Glu-358.

The protein belongs to the peptidase M24A family. Methionine aminopeptidase type 1 subfamily. As to quaternary structure, associates with the 60S ribosomal subunit of the 80S translational complex. It depends on Zn(2+) as a cofactor. The cofactor is Co(2+). Mn(2+) serves as cofactor. Requires Fe(2+) as cofactor.

Its subcellular location is the cytoplasm. It catalyses the reaction Release of N-terminal amino acids, preferentially methionine, from peptides and arylamides.. Cotranslationally removes the N-terminal methionine from nascent proteins. The N-terminal methionine is often cleaved when the second residue in the primary sequence is small and uncharged (Met-Ala-, Cys, Gly, Pro, Ser, Thr, or Val). The chain is Methionine aminopeptidase 1 (metap1) from Xenopus tropicalis (Western clawed frog).